The chain runs to 302 residues: Sulfate adenylyltransferase subunit 2 (302 aa).

Belongs to the PAPS reductase family. CysD subfamily. In terms of assembly, heterodimer composed of CysD, the smaller subunit, and CysN.

It carries out the reaction sulfate + ATP + H(+) = adenosine 5'-phosphosulfate + diphosphate. It functions in the pathway sulfur metabolism; hydrogen sulfide biosynthesis; sulfite from sulfate: step 1/3. In terms of biological role, with CysN forms the ATP sulfurylase (ATPS) that catalyzes the adenylation of sulfate producing adenosine 5'-phosphosulfate (APS) and diphosphate, the first enzymatic step in sulfur assimilation pathway. APS synthesis involves the formation of a high-energy phosphoric-sulfuric acid anhydride bond driven by GTP hydrolysis by CysN coupled to ATP hydrolysis by CysD. This Salmonella arizonae (strain ATCC BAA-731 / CDC346-86 / RSK2980) protein is Sulfate adenylyltransferase subunit 2.